We begin with the raw amino-acid sequence, 961 residues long: Leucine--tRNA ligase (961 aa).

Positions 41 to 51 (PYLNGNLHAGH) match the 'HIGH' region motif. The 'KMSKS' region motif lies at 632–636 (KMSKS). K635 is a binding site for ATP.

This sequence belongs to the class-I aminoacyl-tRNA synthetase family.

Its subcellular location is the cytoplasm. The catalysed reaction is tRNA(Leu) + L-leucine + ATP = L-leucyl-tRNA(Leu) + AMP + diphosphate. This chain is Leucine--tRNA ligase, found in Methanosarcina acetivorans (strain ATCC 35395 / DSM 2834 / JCM 12185 / C2A).